Consider the following 371-residue polypeptide: DNA replication and repair protein RecF (371 aa).

An ATP-binding site is contributed by 30–37 (GANAQGKT).

Belongs to the RecF family.

The protein resides in the cytoplasm. Functionally, the RecF protein is involved in DNA metabolism; it is required for DNA replication and normal SOS inducibility. RecF binds preferentially to single-stranded, linear DNA. It also seems to bind ATP. This chain is DNA replication and repair protein RecF, found in Lacticaseibacillus casei (strain BL23) (Lactobacillus casei).